A 352-amino-acid chain; its full sequence is Anthranilate phosphoribosyltransferase (352 aa).

5-phospho-alpha-D-ribose 1-diphosphate-binding positions include Gly-94, 97-98, Ser-102, 104-107, 122-130, and Ser-134; these read GS, NIST, and KHGNRAVSS. Anthranilate is bound at residue Gly-94. Ser-106 is a binding site for Mg(2+). Asn-125 contributes to the anthranilate binding site. Position 180 (Arg-180) interacts with anthranilate. Residues Asp-239 and Glu-240 each coordinate Mg(2+).

Belongs to the anthranilate phosphoribosyltransferase family. Homodimer. Requires Mg(2+) as cofactor.

It catalyses the reaction N-(5-phospho-beta-D-ribosyl)anthranilate + diphosphate = 5-phospho-alpha-D-ribose 1-diphosphate + anthranilate. It functions in the pathway amino-acid biosynthesis; L-tryptophan biosynthesis; L-tryptophan from chorismate: step 2/5. In terms of biological role, catalyzes the transfer of the phosphoribosyl group of 5-phosphorylribose-1-pyrophosphate (PRPP) to anthranilate to yield N-(5'-phosphoribosyl)-anthranilate (PRA). The polypeptide is Anthranilate phosphoribosyltransferase (Geobacter sp. (strain M21)).